A 456-amino-acid polypeptide reads, in one-letter code: Histidine--tRNA ligase (456 aa).

The protein belongs to the class-II aminoacyl-tRNA synthetase family. As to quaternary structure, homodimer.

The protein resides in the cytoplasm. The enzyme catalyses tRNA(His) + L-histidine + ATP = L-histidyl-tRNA(His) + AMP + diphosphate + H(+). The polypeptide is Histidine--tRNA ligase (Cupriavidus taiwanensis (strain DSM 17343 / BCRC 17206 / CCUG 44338 / CIP 107171 / LMG 19424 / R1) (Ralstonia taiwanensis (strain LMG 19424))).